We begin with the raw amino-acid sequence, 160 residues long: Inorganic pyrophosphatase (160 aa).

Substrate contacts are provided by lysine 16, arginine 28, and tyrosine 40. 3 residues coordinate Mg(2+): aspartate 50, aspartate 55, and aspartate 87. A substrate-binding site is contributed by tyrosine 126.

This sequence belongs to the PPase family. In terms of assembly, homohexamer. The cofactor is Mg(2+).

Its subcellular location is the cytoplasm. The enzyme catalyses diphosphate + H2O = 2 phosphate + H(+). Functionally, catalyzes the hydrolysis of inorganic pyrophosphate (PPi) forming two phosphate ions. The polypeptide is Inorganic pyrophosphatase (Nanoarchaeum equitans (strain Kin4-M)).